A 143-amino-acid polypeptide reads, in one-letter code: MDWNAIQGILPHRYPFLLVDRVLEVEAGRRAVGQKNVSGNEWYFSGHFPGQPVMPGVLIMEALAQVGAVALLSLPEFQGRLALFGGMDRVRFRRQVVPGDVLRLETEIIKLKGRVGKGYGRAFVGEELAAEGELLFAVGEKIE.

H47 is a catalytic residue.

It belongs to the thioester dehydratase family. FabZ subfamily.

It localises to the cytoplasm. The catalysed reaction is a (3R)-hydroxyacyl-[ACP] = a (2E)-enoyl-[ACP] + H2O. Functionally, involved in unsaturated fatty acids biosynthesis. Catalyzes the dehydration of short chain beta-hydroxyacyl-ACPs and long chain saturated and unsaturated beta-hydroxyacyl-ACPs. This chain is 3-hydroxyacyl-[acyl-carrier-protein] dehydratase FabZ, found in Moorella thermoacetica (strain ATCC 39073 / JCM 9320).